A 475-amino-acid polypeptide reads, in one-letter code: Adenosylhomocysteinase (475 aa).

The substrate site is built by threonine 66, aspartate 141, and glutamate 201. 202 to 204 contributes to the NAD(+) binding site; it reads TTT. Substrate is bound by residues lysine 231 and aspartate 235. NAD(+)-binding positions include asparagine 236, 265–270, glutamate 288, asparagine 323, 344–346, and asparagine 389; these read GYGEVG and IGH.

Belongs to the adenosylhomocysteinase family. NAD(+) serves as cofactor.

The protein localises to the cytoplasm. The catalysed reaction is S-adenosyl-L-homocysteine + H2O = L-homocysteine + adenosine. It participates in amino-acid biosynthesis; L-homocysteine biosynthesis; L-homocysteine from S-adenosyl-L-homocysteine: step 1/1. May play a key role in the regulation of the intracellular concentration of adenosylhomocysteine. The chain is Adenosylhomocysteinase from Geobacter sulfurreducens (strain ATCC 51573 / DSM 12127 / PCA).